The chain runs to 185 residues: MANVIIEKAKERMTQSHQSLAREFGGIRAGRANASLLDRVHVEYYGVETPLNQIASITIPEARVLLVTPFDKSSLKDIERALNASDLGITPANDGSVIRLVIPALTEETRRDLAKEVKKVGENAKVAVRNIRRDAMDEAKKQEKAKEITEDELKTLEKDIQKVTDDAVKHIDDMTANKEKELLEV.

The protein belongs to the RRF family.

It localises to the cytoplasm. Its function is as follows. Responsible for the release of ribosomes from messenger RNA at the termination of protein biosynthesis. May increase the efficiency of translation by recycling ribosomes from one round of translation to another. This chain is Ribosome-recycling factor, found in Streptococcus pneumoniae serotype 19F (strain G54).